Reading from the N-terminus, the 439-residue chain is Exodeoxyribonuclease 7 large subunit (439 aa).

This sequence belongs to the XseA family. As to quaternary structure, heterooligomer composed of large and small subunits.

The protein resides in the cytoplasm. It carries out the reaction Exonucleolytic cleavage in either 5'- to 3'- or 3'- to 5'-direction to yield nucleoside 5'-phosphates.. Functionally, bidirectionally degrades single-stranded DNA into large acid-insoluble oligonucleotides, which are then degraded further into small acid-soluble oligonucleotides. The chain is Exodeoxyribonuclease 7 large subunit from Haemophilus influenzae (strain ATCC 51907 / DSM 11121 / KW20 / Rd).